The sequence spans 378 residues: Cytochrome b (378 aa).

The next 4 membrane-spanning stretches (helical) occupy residues 34–54, 78–99, 114–134, and 179–199; these read FGSL…FLAM, WLLR…YLHV, WLIG…GYVL, and FFTF…IHLL. His84 and His98 together coordinate heme b. Positions 183 and 197 each coordinate heme b. An a ubiquinone-binding site is contributed by His202. 4 consecutive transmembrane segments (helical) span residues 227-247, 289-309, 321-341, and 348-368; these read FKDI…VLIS, LGGV…PFYN, INQV…WIGA, and YVLI…VNPL.

The protein belongs to the cytochrome b family. As to quaternary structure, the main subunits of complex b-c1 are: cytochrome b, cytochrome c1 and the Rieske protein. It depends on heme b as a cofactor.

Its subcellular location is the mitochondrion inner membrane. In terms of biological role, component of the ubiquinol-cytochrome c reductase complex (complex III or cytochrome b-c1 complex) that is part of the mitochondrial respiratory chain. The b-c1 complex mediates electron transfer from ubiquinol to cytochrome c. Contributes to the generation of a proton gradient across the mitochondrial membrane that is then used for ATP synthesis. The polypeptide is Cytochrome b (mt:Cyt-b) (Drosophila sechellia (Fruit fly)).